A 377-amino-acid polypeptide reads, in one-letter code: Anhydro-N-acetylmuramic acid kinase (377 aa).

An ATP-binding site is contributed by 12–19 (GTSLDGID).

Belongs to the anhydro-N-acetylmuramic acid kinase family.

It catalyses the reaction 1,6-anhydro-N-acetyl-beta-muramate + ATP + H2O = N-acetyl-D-muramate 6-phosphate + ADP + H(+). It functions in the pathway amino-sugar metabolism; 1,6-anhydro-N-acetylmuramate degradation. The protein operates within cell wall biogenesis; peptidoglycan recycling. Functionally, catalyzes the specific phosphorylation of 1,6-anhydro-N-acetylmuramic acid (anhMurNAc) with the simultaneous cleavage of the 1,6-anhydro ring, generating MurNAc-6-P. Is required for the utilization of anhMurNAc either imported from the medium or derived from its own cell wall murein, and thus plays a role in cell wall recycling. The protein is Anhydro-N-acetylmuramic acid kinase of Methylorubrum extorquens (strain CM4 / NCIMB 13688) (Methylobacterium extorquens).